An 827-amino-acid polypeptide reads, in one-letter code: Zinc phosphodiesterase ELAC protein 2 (827 aa).

The transit peptide at Met-1–Met-16 directs the protein to the mitochondrion. Disordered regions lie at residues Thr-15–Pro-46 and Ser-181–Pro-220. Basic and acidic residues predominate over residues Ser-181 to Arg-192. Phosphoserine is present on residues Ser-193, Ser-197, Ser-202, Ser-207, Ser-617, and Ser-735. The span at Asn-199–Pro-210 shows a compositional bias: polar residues. Residues Leu-794 to Gln-827 are disordered. At Thr-795 the chain carries Phosphothreonine. At Ser-800 the chain carries Phosphoserine. Positions Ser-801–His-817 are enriched in basic and acidic residues. The residue at position 818 (Ser-818) is a Phosphoserine.

It belongs to the RNase Z family. In terms of assembly, homodimer. Interacts with PTCD1. Zn(2+) is required as a cofactor.

It localises to the mitochondrion. The protein resides in the mitochondrion matrix. It is found in the mitochondrion nucleoid. The protein localises to the nucleus. The catalysed reaction is Endonucleolytic cleavage of RNA, removing extra 3' nucleotides from tRNA precursor, generating 3' termini of tRNAs. A 3'-hydroxy group is left at the tRNA terminus and a 5'-phosphoryl group is left at the trailer molecule.. Zinc phosphodiesterase, which displays mitochondrial tRNA 3'-processing endonuclease activity. Involved in tRNA maturation, by removing a 3'-trailer from precursor tRNA. Associates with mitochondrial DNA complexes at the nucleoids to initiate RNA processing and ribosome assembly. The protein is Zinc phosphodiesterase ELAC protein 2 (Elac2) of Rattus norvegicus (Rat).